The following is a 31-amino-acid chain: Cyclotide mech-4 (31 aa).

The cyclopeptide (Gly-Asp) cross-link spans 1-31 (GSIPCGESCVYIPCISSLLGCSCKSKVCYKD). 3 disulfides stabilise this stretch: Cys-5–Cys-21, Cys-9–Cys-23, and Cys-14–Cys-28.

Post-translationally, this is a cyclic peptide. In terms of processing, contains 3 disulfide bonds.

In terms of biological role, probably participates in a plant defense mechanism (Potential). Binds to and induces leakage in phospholipd membranes, particularly ones containing 1-palmitoyl-2-oleophosphatidylethanolamine (POPE). The polypeptide is Cyclotide mech-4 (Melicytus chathamicus (Chatham Island mahoe)).